The following is a 327-amino-acid chain: T-cell surface glycoprotein CD1a (327 aa).

The N-terminal stretch at M1–G16 is a signal peptide. Residues N17–V300 are Extracellular-facing. N-linked (GlcNAc...) asparagine glycosylation is found at N37, N60, and N74. R90–S94 contacts a D-galactosylceramide. 2 cysteine pairs are disulfide-bonded: C119/C183 and C223/C278. A glycan (N-linked (GlcNAc...) asparagine) is linked at N145. Residues E171 and T175 each contribute to the a D-galactosylceramide site. Positions P184 to V291 constitute an Ig-like domain. The helical transmembrane segment at G301–F321 threads the bilayer. The Cytoplasmic segment spans residues R322–C327.

Heterodimer with B2M (beta-2-microglobulin). Interacts with CD74. Expressed on cortical thymocytes, epidermal Langerhans cells, dendritic cells, on certain T-cell leukemias, and in various other tissues.

Its subcellular location is the cell membrane. It localises to the membrane raft. The protein resides in the endosome membrane. Antigen-presenting protein that binds self and non-self lipid and glycolipid antigens and presents them to T-cell receptors on natural killer T-cells. This is T-cell surface glycoprotein CD1a (CD1A) from Homo sapiens (Human).